Consider the following 175-residue polypeptide: Adenine phosphoribosyltransferase (175 aa).

Belongs to the purine/pyrimidine phosphoribosyltransferase family. As to quaternary structure, homodimer.

It localises to the cytoplasm. It carries out the reaction AMP + diphosphate = 5-phospho-alpha-D-ribose 1-diphosphate + adenine. The protein operates within purine metabolism; AMP biosynthesis via salvage pathway; AMP from adenine: step 1/1. Functionally, catalyzes a salvage reaction resulting in the formation of AMP, that is energically less costly than de novo synthesis. This Caldicellulosiruptor bescii (strain ATCC BAA-1888 / DSM 6725 / KCTC 15123 / Z-1320) (Anaerocellum thermophilum) protein is Adenine phosphoribosyltransferase.